A 373-amino-acid chain; its full sequence is Filamin-binding LIM protein 1 (373 aa).

The segment at 1–70 (MASKPEKRVA…SPWTTPGRAA (70 aa)) is filamin-binding. Disordered stretches follow at residues 41-119 (RPWE…PSEE) and 135-176 (QLHL…PVEK). Residues 104–114 (LPPPPPPPPVL) are compositionally biased toward pro residues. 3 LIM zinc-binding domains span residues 181–242 (DICA…TLER), 243–300 (CGKC…RKFA), and 301–370 (PVCS…RSAA). Residues 276–373 (IGDESFALGS…HVKRSAAGCC (98 aa)) are FERMT2-binding.

Interacts with NKX2-5. Isoform 1 and isoform 3 interact with FERMT2, FLNA, FLNB and FLNC. Isoform 2 interacts with FLNB. As to expression, isoform 1 and isoform 3 are expressed in heart, kidney, lung, pancreas, placenta and platelets. Isoform 2 is expressed in brain, heart, kidney, lung, pancreas, placenta, skeletal muscle and platelets.

It localises to the cell junction. Its subcellular location is the focal adhesion. It is found in the cytoplasm. The protein resides in the cytoskeleton. The protein localises to the stress fiber. In terms of biological role, serves as an anchoring site for cell-ECM adhesion proteins and filamin-containing actin filaments. Is implicated in cell shape modulation (spreading) and motility. May participate in the regulation of filamin-mediated cross-linking and stabilization of actin filaments. May also regulate the assembly of filamin-containing signaling complexes that control actin assembly. Promotes dissociation of FLNA from ITGB3 and ITGB7. Promotes activation of integrins and regulates integrin-mediated cell-cell adhesion. The sequence is that of Filamin-binding LIM protein 1 (FBLIM1) from Homo sapiens (Human).